An 81-amino-acid polypeptide reads, in one-letter code: Photosystem I iron-sulfur center (81 aa).

4Fe-4S ferredoxin-type domains lie at 1–31 (MSHT…MVPW) and 37–68 (GQIA…IRVY). Residues Cys11, Cys14, Cys17, Cys21, Cys48, Cys51, Cys54, and Cys58 each coordinate [4Fe-4S] cluster.

As to quaternary structure, the cyanobacterial PSI reaction center is composed of one copy each of PsaA,B,C,D,E,F,I,J,K,L,M and X, and forms trimeric complexes. The cofactor is [4Fe-4S] cluster.

Its subcellular location is the cellular thylakoid membrane. It catalyses the reaction reduced [plastocyanin] + hnu + oxidized [2Fe-2S]-[ferredoxin] = oxidized [plastocyanin] + reduced [2Fe-2S]-[ferredoxin]. In terms of biological role, apoprotein for the two 4Fe-4S centers FA and FB of photosystem I (PSI); essential for photochemical activity. FB is the terminal electron acceptor of PSI, donating electrons to ferredoxin. The C-terminus interacts with PsaA/B/D and helps assemble the protein into the PSI complex. Required for binding of PsaD and PsaE to PSI. PSI is a plastocyanin/cytochrome c6-ferredoxin oxidoreductase, converting photonic excitation into a charge separation, which transfers an electron from the donor P700 chlorophyll pair to the spectroscopically characterized acceptors A0, A1, FX, FA and FB in turn. The chain is Photosystem I iron-sulfur center from Acaryochloris marina (strain MBIC 11017).